The following is a 67-amino-acid chain: Peptide Hp1036 (67 aa).

An N-terminal signal peptide occupies residues 1-23; sequence MKTQFAILLITLVLFQMFSQSDA. Phenylalanine amide is present on phenylalanine 36. Positions 40-67 are excised as a propeptide; sequence GLNDLSDLDELFDGEISEADVDFLREIM.

The protein belongs to the non-disulfide-bridged peptide (NDBP) superfamily. Short antimicrobial peptide (group 4) family. As to expression, expressed by the venom gland.

Its subcellular location is the secreted. The protein localises to the target cell membrane. Its function is as follows. Amphipathic peptide with antibacterial activities. Shows antiviral activities against the herpes simplex virus type-1. It potently inhibits the initial infection by provoking the rupture of viral envelop and the dissociation of proteins from the virions (EC(50) is 0.43 uM). It also effectively inhibits viral attachment (EC(50) is 2.87 uM), viral entry (EC(50) is 4.29 uM) and viral proliferation after infection (EC(50) is 7.86). Morever, it enters mammalian tested cells (Vero) and reduces the intracellular infectivity. In Heterometrus petersii (Asian forest scorpion), this protein is Peptide Hp1036.